A 98-amino-acid chain; its full sequence is ATCTTTQQTAAYVALVSILSDSSFNQCATDSGYSMLTATALPTTAQYKLMCASTACNTMITKIVSLNPPDCELTVPTSGLVLNVYSYANGFSATCASL.

Disulfide bonds link Cys3–Cys71, Cys27–Cys56, and Cys51–Cys95.

The protein belongs to the elicitin family.

It localises to the secreted. Induces local and distal defense responses (incompatible hypersensitive reaction) in plants from the solanaceae and cruciferae families. Elicits leaf necrosis and causes the accumulation of pathogenesis-related proteins. Might interact with the lipidic molecules of the plasma membrane. This Phytophthora capsici protein is Alpha-elicitin capsicein.